Reading from the N-terminus, the 261-residue chain is 5'-nucleotidase SurE (261 aa).

Residues aspartate 8, aspartate 9, serine 39, and asparagine 94 each coordinate a divalent metal cation.

This sequence belongs to the SurE nucleotidase family. A divalent metal cation serves as cofactor.

The protein resides in the cytoplasm. It carries out the reaction a ribonucleoside 5'-phosphate + H2O = a ribonucleoside + phosphate. Its function is as follows. Nucleotidase that shows phosphatase activity on nucleoside 5'-monophosphates. The polypeptide is 5'-nucleotidase SurE (Methanopyrus kandleri (strain AV19 / DSM 6324 / JCM 9639 / NBRC 100938)).